We begin with the raw amino-acid sequence, 143 residues long: Large ribosomal subunit protein uL15 (143 aa).

The interval 20–52 is disordered; sequence GRGIGSGKGKTAGRGHKGQHSRAGGYHKVGFEG. Residues 30 to 39 show a composition bias toward basic residues; the sequence is TAGRGHKGQH.

Belongs to the universal ribosomal protein uL15 family. As to quaternary structure, part of the 50S ribosomal subunit.

In terms of biological role, binds to the 23S rRNA. The polypeptide is Large ribosomal subunit protein uL15 (Coxiella burnetii (strain CbuG_Q212) (Coxiella burnetii (strain Q212))).